The chain runs to 108 residues: Phosphocarrier protein HPr (108 aa).

The HPr domain occupies 21-108; that stretch reads ELQATCIVKN…DAFSSGFGEL (88 aa). Histidine 35 (pros-phosphohistidine intermediate) is an active-site residue.

The protein belongs to the HPr family.

The protein resides in the cytoplasm. General (non sugar-specific) component of the phosphoenolpyruvate-dependent sugar phosphotransferase system (sugar PTS). This major carbohydrate active-transport system catalyzes the phosphorylation of incoming sugar substrates concomitantly with their translocation across the cell membrane. The phosphoryl group from phosphoenolpyruvate (PEP) is transferred to the phosphoryl carrier protein HPr by enzyme I. Phospho-HPr then transfers it to the PTS EIIA domain. This is Phosphocarrier protein HPr (ptsH) from Chlamydia pneumoniae (Chlamydophila pneumoniae).